A 242-amino-acid chain; its full sequence is Sugar fermentation stimulation protein homolog (242 aa).

This sequence belongs to the SfsA family.

This Nitratidesulfovibrio vulgaris (strain DP4) (Desulfovibrio vulgaris) protein is Sugar fermentation stimulation protein homolog.